The sequence spans 173 residues: Shikimate kinase 1 (173 aa).

Residue 14-19 (GAGKST) participates in ATP binding. Ser18 provides a ligand contact to Mg(2+). Substrate contacts are provided by Asp36, Arg60, and Gly82. An ATP-binding site is contributed by Arg120. Arg140 serves as a coordination point for substrate. Residue Gln157 coordinates ATP.

It belongs to the shikimate kinase family. Monomer. Mg(2+) is required as a cofactor.

The protein resides in the cytoplasm. The enzyme catalyses shikimate + ATP = 3-phosphoshikimate + ADP + H(+). It functions in the pathway metabolic intermediate biosynthesis; chorismate biosynthesis; chorismate from D-erythrose 4-phosphate and phosphoenolpyruvate: step 5/7. Functionally, catalyzes the specific phosphorylation of the 3-hydroxyl group of shikimic acid using ATP as a cosubstrate. The chain is Shikimate kinase 1 from Salmonella typhimurium (strain LT2 / SGSC1412 / ATCC 700720).